An 83-amino-acid polypeptide reads, in one-letter code: Small ribosomal subunit protein uS17 (83 aa).

This sequence belongs to the universal ribosomal protein uS17 family. Part of the 30S ribosomal subunit.

One of the primary rRNA binding proteins, it binds specifically to the 5'-end of 16S ribosomal RNA. This chain is Small ribosomal subunit protein uS17, found in Buchnera aphidicola subsp. Acyrthosiphon pisum (strain 5A).